A 560-amino-acid polypeptide reads, in one-letter code: Arginine--tRNA ligase (560 aa).

The short motif at 121–131 (PNIAKPFSMGH) is the 'HIGH' region element.

This sequence belongs to the class-I aminoacyl-tRNA synthetase family. In terms of assembly, monomer.

Its subcellular location is the cytoplasm. The catalysed reaction is tRNA(Arg) + L-arginine + ATP = L-arginyl-tRNA(Arg) + AMP + diphosphate. The protein is Arginine--tRNA ligase of Exiguobacterium sibiricum (strain DSM 17290 / CCUG 55495 / CIP 109462 / JCM 13490 / 255-15).